Here is a 31-residue protein sequence, read N- to C-terminus: Cyclotide hyen-J (31 aa).

Residues 1–31 (GSVPCGESCVWIPCITSIAGCSCSNKVCYMD) constitute a cross-link (cyclopeptide (Gly-Asp)). 3 cysteine pairs are disulfide-bonded: cysteine 5–cysteine 21, cysteine 9–cysteine 23, and cysteine 14–cysteine 28.

This is a cyclic peptide. Detected in seeds (at protein level).

In terms of biological role, probably participates in a plant defense mechanism. This chain is Cyclotide hyen-J, found in Pigea enneasperma (Spade flower).